Consider the following 207-residue polypeptide: Alpha/beta-tubulin-N-acetyltransferase 9 (207 aa).

Residues 35-180 enclose the N-acetyltransferase domain; the sequence is EELQRLTASE…QEVTLRLTVS (146 aa).

It belongs to the acetyltransferase family. GNAT subfamily.

The catalysed reaction is N-terminal L-methionyl-[tubulin] + acetyl-CoA = N-terminal N(alpha)-acetyl-L-methionyl-[tubulin] + CoA + H(+). N-acetyltransferase that mediates the acetylation of the N-terminal residues of alpha- and beta-tubulin. This is Alpha/beta-tubulin-N-acetyltransferase 9 (NAT9) from Homo sapiens (Human).